The primary structure comprises 691 residues: NADPH--cytochrome P450 reductase (691 aa).

Topologically, residues 2 to 7 (PFGIDN) are lumenal. A helical transmembrane segment spans residues 8–24 (TDFTVLAGLVLAVLLYV). Residues 25–691 (KRNSIKELLM…TSGRYQEDVW (667 aa)) are Cytoplasmic-facing. The 144-residue stretch at 61 to 204 (YLVLYASQTG…DYMAWKDSIL (144 aa)) folds into the Flavodoxin-like domain. Residues 67-72 (SQTGTA), Lys78, 116-119 (STYG), 152-161 (LGNSTYEFFN), and Asp187 contribute to the FMN site. Residues 266-529 (SQPYIAPIVK…HVRRSNFRLP (264 aa)) form the FAD-binding FR-type domain. Residue Arg285 coordinates NADP(+). FAD is bound by residues 439-442 (RYYS), 457-459 (TSI), and 476-479 (GVTT). Residues Thr543, 610–611 (SR), 617–621 (KVYVQ), and Asp646 contribute to the NADP(+) site. Residue Lys666 forms a Glycyl lysine isopeptide (Lys-Gly) (interchain with G-Cter in ubiquitin) linkage. FAD is bound at residue Trp691.

It belongs to the NADPH--cytochrome P450 reductase family. This sequence in the N-terminal section; belongs to the flavodoxin family. The protein in the C-terminal section; belongs to the flavoprotein pyridine nucleotide cytochrome reductase family. As to quaternary structure, interacts with PCL1. The cofactor is FAD. FMN serves as cofactor. In terms of processing, phosphorylated by the cyclin-CDK PCL1-PHO85.

Its subcellular location is the endoplasmic reticulum membrane. It localises to the mitochondrion outer membrane. The protein resides in the cell membrane. It catalyses the reaction 2 oxidized [cytochrome P450] + NADPH = 2 reduced [cytochrome P450] + NADP(+) + H(+). Functionally, this enzyme is required for electron transfer from NADP to cytochrome P450 in microsomes. It can also provide electron transfer to heme oxygenase and cytochrome B5. Involved in ergosterol biosynthesis. Has NADPH-dependent ferrireductase activity on the plasma membrane. The polypeptide is NADPH--cytochrome P450 reductase (Saccharomyces cerevisiae (strain ATCC 204508 / S288c) (Baker's yeast)).